The sequence spans 57 residues: Large ribosomal subunit protein bL32 (57 aa).

This sequence belongs to the bacterial ribosomal protein bL32 family.

The polypeptide is Large ribosomal subunit protein bL32 (Staphylococcus saprophyticus subsp. saprophyticus (strain ATCC 15305 / DSM 20229 / NCIMB 8711 / NCTC 7292 / S-41)).